The following is a 38-amino-acid chain: Photosystem II reaction center protein X 2 (38 aa).

Residues 8–28 (FLWSLVYGAVVLGLLFGAIVF) form a helical membrane-spanning segment.

This sequence belongs to the PsbX family. Type 1 subfamily. As to quaternary structure, PSII is composed of 1 copy each of membrane proteins PsbA, PsbB, PsbC, PsbD, PsbE, PsbF, PsbH, PsbI, PsbJ, PsbK, PsbL, PsbM, PsbT, PsbX, PsbY, PsbZ, Psb30/Ycf12, peripheral proteins PsbO, CyanoQ (PsbQ), PsbU, PsbV and a large number of cofactors. It forms dimeric complexes.

Its subcellular location is the cellular thylakoid membrane. Involved in the binding and/or turnover of quinones at the Q(B) site of photosystem II (PSII). PSII is a light-driven water plastoquinone oxidoreductase, using light energy to abstract electrons from H(2)O, generating a proton gradient subsequently used for ATP formation. The sequence is that of Photosystem II reaction center protein X 2 from Synechococcus sp. (strain JA-3-3Ab) (Cyanobacteria bacterium Yellowstone A-Prime).